The following is a 114-amino-acid chain: Circadian clock oscillator protein KaiB (114 aa).

The protein belongs to the KaiB family. As to quaternary structure, may undergo a major conformational rearrangment; in the free state forms homooligomers. When bound to KaiC switches to a monomeric thioredoxin-fold (KaiB(fs)). The active oscillator complex is probably KaiC(6):KaiB(6).

Its function is as follows. Component of the KaiBC clock protein complex, which constitutes the main circadian regulator in cyanobacteria; it may modify the ATPase activity of KaiC. In terms of biological role, may be a metamorphic protein which reversibly switches between an inactive tetrameric fold and a rare, thioredoxin-like monomeric fold (KaiB(fs)). KaiB(fs) binds phospho-KaiC, and perhaps clock output effectors. The sequence is that of Circadian clock oscillator protein KaiB from Prochlorococcus marinus (strain MIT 9211).